The chain runs to 585 residues: Aspartate--tRNA ligase (585 aa).

L-aspartate is bound at residue glutamate 173. Residues 197–200 (QTLK) form an aspartate region. L-aspartate is bound at residue arginine 219. ATP-binding positions include 219–221 (RDE) and glutamine 228. Histidine 446 is an L-aspartate binding site. An ATP-binding site is contributed by glutamate 480. Residue arginine 487 coordinates L-aspartate. ATP is bound at residue 532-535 (GLDR).

This sequence belongs to the class-II aminoacyl-tRNA synthetase family. Type 1 subfamily. Homodimer.

The protein localises to the cytoplasm. The catalysed reaction is tRNA(Asp) + L-aspartate + ATP = L-aspartyl-tRNA(Asp) + AMP + diphosphate. Catalyzes the attachment of L-aspartate to tRNA(Asp) in a two-step reaction: L-aspartate is first activated by ATP to form Asp-AMP and then transferred to the acceptor end of tRNA(Asp). This Parabacteroides distasonis (strain ATCC 8503 / DSM 20701 / CIP 104284 / JCM 5825 / NCTC 11152) protein is Aspartate--tRNA ligase.